Consider the following 264-residue polypeptide: Small ribosomal subunit protein eS1 (264 aa).

The interval His-232 to Val-264 is disordered. Residues Ser-242–Gly-255 show a composition bias toward basic and acidic residues.

Belongs to the eukaryotic ribosomal protein eS1 family. Component of the small ribosomal subunit. Mature ribosomes consist of a small (40S) and a large (60S) subunit. The 40S subunit contains about 33 different proteins and 1 molecule of RNA (18S). The 60S subunit contains about 49 different proteins and 3 molecules of RNA (28S, 5.8S and 5S). Part of the small subunit (SSU) processome, composed of more than 70 proteins and the RNA chaperone small nucleolar RNA (snoRNA) U3.

The protein resides in the cytoplasm. The protein localises to the nucleus. Its subcellular location is the nucleolus. In terms of biological role, component of the small ribosomal subunit. The ribosome is a large ribonucleoprotein complex responsible for the synthesis of proteins in the cell. Part of the small subunit (SSU) processome, first precursor of the small eukaryotic ribosomal subunit. During the assembly of the SSU processome in the nucleolus, many ribosome biogenesis factors, an RNA chaperone and ribosomal proteins associate with the nascent pre-rRNA and work in concert to generate RNA folding, modifications, rearrangements and cleavage as well as targeted degradation of pre-ribosomal RNA by the RNA exosome. May play a role during erythropoiesis. This chain is Small ribosomal subunit protein eS1, found in Ophiophagus hannah (King cobra).